Consider the following 1016-residue polypeptide: Poly [ADP-ribose] polymerase 1 (1016 aa).

Residue Ala-2 is modified to N-acetylalanine. A PARP-type 1 zinc finger spans residues 9–93 (YRVEYAKSGR…TIKKMAETGG (85 aa)). Residues Cys-21 and Cys-24 each contribute to the Zn(2+) site. The residue at position 41 (Ser-41) is a Phosphoserine. Residues His-53 and Cys-56 each coordinate Zn(2+). N6-acetyllysine occurs at positions 100 and 108. Residues 116-206 (FGAGYAKSNR…TLKKQLPAIK (91 aa)) form a PARP-type 2 zinc finger. Cys-128 and Cys-131 together coordinate Zn(2+). The residue at position 134 (Lys-134) is an N6-acetyllysine. Residues His-162 and Cys-165 each contribute to the Zn(2+) site. Ser-180 and Ser-188 each carry phosphoserine. Lys-206 is covalently cross-linked (Glycyl lysine isopeptide (Lys-Gly) (interchain with G-Cter in SUMO1); alternate). Lys-206 is covalently cross-linked (Glycyl lysine isopeptide (Lys-Gly) (interchain with G-Cter in SUMO2); alternate). Short sequence motifs (nuclear localization signal) lie at residues 210 to 212 (KRK) and 224 to 229 (KKKSKK). The PADR1 zinc-binding domain occupies 228–362 (KKEKDKEIKL…IKKQDRIFPP (135 aa)). A Glycyl lysine isopeptide (Lys-Gly) (interchain with G-Cter in SUMO2) cross-link involves residue Lys-252. Phosphoserine is present on residues Ser-277 and Ser-280. The tract at residues 293–335 (GALLPCEECSGQLVFKGDAYYCTGDVTAWTKCMVKTQTPNRKE) is zinc ribbon. 4 residues coordinate Zn(2+): Cys-298, Cys-301, Cys-314, and Cys-324. The segment at 360–390 (FPPESSTPVGAAAPPSAASAPAAVHSGPPDK) is disordered. Low complexity predominate over residues 365-386 (STPVGAAAPPSAASAPAAVHSG). Residues 376–526 (AASAPAAVHS…GTNKSEKRMK (151 aa)) form an automodification domain region. A BRCT domain is found at 387-478 (PPDKPLSNMK…KSLQELLSTH (92 aa)). The residue at position 389 (Asp-389) is a PolyADP-ribosyl aspartic acid. Glu-409, Glu-415, Glu-437, Glu-446, Glu-447, Glu-450, and Glu-458 each carry polyADP-ribosyl glutamic acid. Lys-469 is covalently cross-linked (Glycyl lysine isopeptide (Lys-Gly) (interchain with G-Cter in SUMO2)). 2 positions are modified to polyADP-ribosyl glutamic acid: Glu-473 and Glu-486. Lys-488 participates in a covalent cross-link: Glycyl lysine isopeptide (Lys-Gly) (interchain with G-Cter in SUMO1); alternate. Lys-488 is covalently cross-linked (Glycyl lysine isopeptide (Lys-Gly) (interchain with G-Cter in SUMO2); alternate). PolyADP-ribosyl glutamic acid occurs at positions 490 and 493. A disordered region spans residues 494–523 (AVGPKGKSGAAPSKKSKGPVKEEGTNKSEK). The segment covering 496–506 (GPKGKSGAAPS) has biased composition (low complexity). ADP-ribosylserine is present on residues Ser-501, Ser-506, and Ser-509. Positions 512–523 (PVKEEGTNKSEK) are enriched in basic and acidic residues. A Glycyl lysine isopeptide (Lys-Gly) (interchain with G-Cter in SUMO2) cross-link involves residue Lys-514. A polyADP-ribosyl glutamic acid mark is found at Glu-515 and Glu-516. Ser-521 bears the ADP-ribosylserine mark. At Glu-522 the chain carries PolyADP-ribosyl glutamic acid. Lys-523 carries the N6-(ADP-ribosyl)lysine modification. Lys-530 is covalently cross-linked (Glycyl lysine isopeptide (Lys-Gly) (interchain with G-Cter in SUMO2)). The WGR domain occupies 544-640 (NAHVLEKGGK…KNFTKHPKKF (97 aa)). Thr-596 carries the phosphothreonine modification. N6-acetyllysine is present on residues Lys-602 and Lys-623. The region spanning 664 to 781 (KSKLPKPVQN…DIEVAYSLLR (118 aa)) is the PARP alpha-helical domain. Lys-750 is covalently cross-linked (Glycyl lysine isopeptide (Lys-Gly) (interchain with G-Cter in SUMO1); alternate). A Glycyl lysine isopeptide (Lys-Gly) (interchain with G-Cter in SUMO2); alternate cross-link involves residue Lys-750. A phosphoserine mark is found at Ser-784 and Ser-788. One can recognise a PARP catalytic domain in the interval 790-1016 (DPIDVNYEKL…LKFNFKTSLW (227 aa)). Residues 864–866 (HGS), Gly-873, Arg-880, and Ser-906 contribute to the NAD(+) site. The active-site For poly [ADP-ribose] polymerase activity is Glu-990.

This sequence belongs to the ARTD/PARP family. In terms of assembly, homodimer; PARP-type zinc-fingers from separate PARP1 molecules form a dimer module that specifically recognizes DNA strand breaks. Heterodimer; heterodimerizes with PARP2. Interacts (via the PARP catalytic domain) with HPF1. Interacts with NMNAT1. Interacts with nucleosomes; with a preference for nucleosomes containing H2A.X. Interacts with APTX. Component of a base excision repair (BER) complex, containing at least XRCC1, PARP1, PARP2, POLB and LRIG3. Interacts with SRY. The SWAP complex consists of NPM1, NCL, PARP1 and SWAP70. Interacts with TIAM2. Interacts with PARP3; leading to activate PARP1 in absence of DNA. Interacts (when poly-ADP-ribosylated) with CHD1L (via macro domain). Interacts with the DNA polymerase alpha catalytic subunit POLA1; this interaction functions as part of the control of replication fork progression. Interacts with EEF1A1 and TXK. Interacts with RNF4. Interacts with RNF146. Interacts with ZNF423. Interacts with APLF. Interacts with SNAI1 (via zinc fingers); the interaction requires SNAI1 to be poly-ADP-ribosylated and non-phosphorylated (active) by GSK3B. Interacts (when poly-ADP-ribosylated) with PARP9. Interacts with NR4A3; activates PARP1 by improving acetylation of PARP1 and suppressing the interaction between PARP1 and SIRT1. Interacts (via catalytic domain) with PUM3; the interaction inhibits the poly-ADP-ribosylation activity of PARP1 and the degradation of PARP1 by CASP3 following genotoxic stress. Interacts with ZNF365. Interacts with RRP1B. Interacts with TIMELESS; the interaction is direct. Interacts with CGAS; leading to impede the formation of the PARP1-TIMELESS complex. Interacts with KHDC3L, the interaction is increased following the formation of DNA double-strand breaks. Interacts (when auto-poly-ADP-ribosylated) with XRCC1; leading to inhibit PARP1 ADP-ribosyltransferase activity. Interacts with SPINDOC; promoting PARP1 ADP-ribosyltransferase activity. Interacts with BANF1; leading to inhibit PARP1 ADP-ribosyltransferase activity in response to oxidative DNA damage. Interacts (when sumoylated and ubiquitinated) with VCP/p97; leading to its extraction from chromatin. Interacts with YARS1; promoting PARP1 ADP-ribosyltransferase activity. Interacts with PACMP micropeptide; Interacts with PACMP micropeptide; interaction. Interacts (when poly-ADP-ribosylated) with isoform 1 of MACROH2A1; MACROH2A1 specifically binds to poly-ADP-ribose chains and inhibits PARP1 activity, limiting the consumption of nuclear NAD(+). Interacts with CARM1; promoting recruitment to replication forks. Interacts with RECQL. Interacts with ZNF32; the interaction reshapes ZNF432 interacting proteins. Interacts with TPRN; TPRN interacts with a number of DNA damage response proteins, is recruited to sites of DNA damage and may play a role in DNA damage repair. As to quaternary structure, interacts (when auto-poly-ADP-ribosylated) with AIFM1. Poly-ADP-ribosylated on serine, glutamate and aspartate residues by autocatalysis. Auto-ADP-ribosylation on serine takes place following interaction with HPF1. Auto poly-ADP-ribosylation on serine residues promotes its dissociation from chromatin. Poly-ADP-ribosylated by PARP2; poly-ADP-ribosylation mediates the recruitment of CHD1L to DNA damage sites. Mono-ADP-ribosylated at Lys-523 by SIRT6 in response to oxidative stress, promoting recruitment to double-strand breaks (DSBs) sites. In terms of processing, S-nitrosylated, leading to inhibit transcription regulation activity. Post-translationally, phosphorylated at Thr-596 by PRKDC in response to DNA damage following virus infection, promoting its translocation to the cytosol. Phosphorylated by TXK. Proteolytically cleaved by caspase-3 (CASP3) and caspase-7 (CASP7) in response to apoptosis to generate the Poly [ADP-ribose] polymerase 1, processed N-terminus and Poly [ADP-ribose] polymerase 1, processed C-terminus forms. In terms of processing, sumoylated with SUMO1 or SUMO2 by PIAS4 following prolonged residence (trapping) to chromatin. Sumoylation promotes ubiquitination by RNF4 and removal from chromatin by VCP/p97. Post-translationally, ubiquitinated by RNF4 following sumoylation by PIAS4 in response to prolonged residence (trapping) to chromatin. Ubiquitination promotes removal from chromatin by VCP/p97.

It localises to the chromosome. Its subcellular location is the nucleus. The protein localises to the nucleolus. It is found in the cytoplasm. The protein resides in the cytosol. The catalysed reaction is NAD(+) + (ADP-D-ribosyl)n-acceptor = nicotinamide + (ADP-D-ribosyl)n+1-acceptor + H(+).. It catalyses the reaction L-seryl-[protein] + NAD(+) = O-(ADP-D-ribosyl)-L-seryl-[protein] + nicotinamide + H(+). The enzyme catalyses L-aspartyl-[protein] + NAD(+) = 4-O-(ADP-D-ribosyl)-L-aspartyl-[protein] + nicotinamide. It carries out the reaction L-glutamyl-[protein] + NAD(+) = 5-O-(ADP-D-ribosyl)-L-glutamyl-[protein] + nicotinamide. The catalysed reaction is L-tyrosyl-[protein] + NAD(+) = O-(ADP-D-ribosyl)-L-tyrosyl-[protein] + nicotinamide + H(+). It catalyses the reaction L-histidyl-[protein] + NAD(+) = N(tele)-(ADP-D-ribosyl)-L-histidyl-[protein] + nicotinamide + H(+). ADP-ribosyltransferase activity is regulated via an allosteric activation mechanism. In absence of activation signal, PARP1 is autoinhibited by the PARP alpha-helical domain (also named HD region), which prevents effective NAD(+)-binding. Activity is highly stimulated by signals, such as DNA strand breaks. Binding to damaged DNA unfolds the PARP alpha-helical domain, relieving autoinhibition. Poly-ADP-ribosyltransferase activity is tightly regulated and PARP1 is removed from damaged chromatin following initial poly-ADP-ribosylation of chromatin to avoid prolonged residence (trapping) that has cytotoxic consequences. A number of factors (VCP/p97) or post-translational modifications (auto-poly-ADP-ribosylation or ubiquitination) promote PARP1 removal from chromatin. In terms of biological role, poly-ADP-ribosyltransferase that mediates poly-ADP-ribosylation of proteins and plays a key role in DNA repair. Mediates glutamate, aspartate, serine, histidine or tyrosine ADP-ribosylation of proteins: the ADP-D-ribosyl group of NAD(+) is transferred to the acceptor carboxyl group of target residues and further ADP-ribosyl groups are transferred to the 2'-position of the terminal adenosine moiety, building up a polymer with an average chain length of 20-30 units. Serine ADP-ribosylation of proteins constitutes the primary form of ADP-ribosylation of proteins in response to DNA damage. Specificity for the different amino acids is conferred by interacting factors, such as HPF1 and NMNAT1. Following interaction with HPF1, catalyzes serine ADP-ribosylation of target proteins; HPF1 confers serine specificity by completing the PARP1 active site. Also catalyzes tyrosine ADP-ribosylation of target proteins following interaction with HPF1. Following interaction with NMNAT1, catalyzes glutamate and aspartate ADP-ribosylation of target proteins; NMNAT1 confers glutamate and aspartate specificity. PARP1 initiates the repair of DNA breaks: recognizes and binds DNA breaks within chromatin and recruits HPF1, licensing serine ADP-ribosylation of target proteins, such as histones (H2BS6ADPr and H3S10ADPr), thereby promoting decompaction of chromatin and the recruitment of repair factors leading to the reparation of DNA strand breaks. HPF1 initiates serine ADP-ribosylation but restricts the polymerase activity of PARP1 in order to limit the length of poly-ADP-ribose chains. In addition to base excision repair (BER) pathway, also involved in double-strand breaks (DSBs) repair: together with TIMELESS, accumulates at DNA damage sites and promotes homologous recombination repair by mediating poly-ADP-ribosylation. Mediates the poly-ADP-ribosylation of a number of proteins, including itself, APLF, CHFR and NFAT5. In addition to proteins, also able to ADP-ribosylate DNA: catalyzes ADP-ribosylation of DNA strand break termini containing terminal phosphates and a 2'-OH group in single- and double-stranded DNA, respectively. Required for PARP9 and DTX3L recruitment to DNA damage sites. PARP1-dependent PARP9-DTX3L-mediated ubiquitination promotes the rapid and specific recruitment of 53BP1/TP53BP1, UIMC1/RAP80, and BRCA1 to DNA damage sites. PARP1-mediated DNA repair in neurons plays a role in sleep: senses DNA damage in neurons and promotes sleep, facilitating efficient DNA repair. In addition to DNA repair, also involved in other processes, such as transcription regulation, programmed cell death, membrane repair, adipogenesis and innate immunity. Acts as a repressor of transcription: binds to nucleosomes and modulates chromatin structure in a manner similar to histone H1, thereby altering RNA polymerase II. Acts both as a positive and negative regulator of transcription elongation, depending on the context. Acts as a positive regulator of transcription elongation by mediating poly-ADP-ribosylation of NELFE, preventing RNA-binding activity of NELFE and relieving transcription pausing. Acts as a negative regulator of transcription elongation in response to DNA damage by catalyzing poly-ADP-ribosylation of CCNT1, disrupting the phase separation activity of CCNT1 and subsequent activation of CDK9. Involved in replication fork progression following interaction with CARM1: mediates poly-ADP-ribosylation at replication forks, slowing fork progression. Poly-ADP-ribose chains generated by PARP1 also play a role in poly-ADP-ribose-dependent cell death, a process named parthanatos. Also acts as a negative regulator of the cGAS-STING pathway. Acts by mediating poly-ADP-ribosylation of CGAS: PARP1 translocates into the cytosol following phosphorylation by PRKDC and catalyzes poly-ADP-ribosylation and inactivation of CGAS. Acts as a negative regulator of adipogenesis: catalyzes poly-ADP-ribosylation of histone H2B on 'Glu-35' (H2BE35ADPr) following interaction with NMNAT1, inhibiting phosphorylation of H2B at 'Ser-36' (H2BS36ph), thereby blocking expression of pro-adipogenetic genes. Involved in the synthesis of ATP in the nucleus, together with NMNAT1, PARG and NUDT5. Nuclear ATP generation is required for extensive chromatin remodeling events that are energy-consuming. Promotes AIFM1-mediated apoptosis. This form, which translocates into the cytoplasm following cleavage by caspase-3 (CASP3) and caspase-7 (CASP7) in response to apoptosis, is auto-poly-ADP-ribosylated and serves as a poly-ADP-ribose carrier to induce AIFM1-mediated apoptosis. Its function is as follows. This cleavage form irreversibly binds to DNA breaks and interferes with DNA repair, promoting DNA damage-induced apoptosis. The sequence is that of Poly [ADP-ribose] polymerase 1 (PARP1) from Bos taurus (Bovine).